The chain runs to 131 residues: Glycine cleavage system H protein (131 aa).

The Lipoyl-binding domain maps to 24–106 (VYCVGITEHA…YTDGWLFKIK (83 aa)). Lys-65 bears the N6-lipoyllysine mark.

The protein belongs to the GcvH family. In terms of assembly, the glycine cleavage system is composed of four proteins: P, T, L and H. (R)-lipoate serves as cofactor.

The glycine cleavage system catalyzes the degradation of glycine. The H protein shuttles the methylamine group of glycine from the P protein to the T protein. This Sodalis glossinidius (strain morsitans) protein is Glycine cleavage system H protein.